The following is a 798-amino-acid chain: MASLSTPNINNTTFVNSKTQLPAVKVHLQKCYVGPWLNRGSKHMFTNYQFGHRQISKVAKYQASPDVVQVCDKVEHSTAQSFELVDKKIEDNIRYVKELLNSIDDGHISVSAYDTAWFALIRDLDGRDCPQFPSTIEWIADNQLADGSWGDEDFYSAYDRLINTLACVLALRTWNVHPEKSEKGISYIKENLHELEDAEAENMTCAFELLFPVLLKRAENLGINEIPYDAPIIKEIYNIRDTKLTRIPLEVLHERSTSILYGMEGLENLDLDWQKLMKLQTPEGSFLTSPAATAFAFMYTKDENCLKYIKYILDKFNGAAVDVYPVDLFARLWAVDRLQRLGISRFFESEIKDCLSYVHRFWTEKGIFSGRHALFHDLDDTSMGFRLLRQHGYDMDPNVFKHFQKDGRFHCLGGDMSDSLTVTYNLYRASQTQFPGEEILEEARNFCYNFLQDRAARNQLVDKWVISKHLADEMRTGLQLPWYASLPRVEARYYLQHYAGSGDVWLGKNFFRMEDISNDKYKEIAKLDFSRCQAQHQFEWTYMQGWYESSNVQEFGISRKDLLVAYFLAAATIFERERTKERIVWAKSHIVSRMIKSFFTNETTSLEEKVALLTGFEDNINGLHKITSAKREHEHVDILLATLHQLLGEFDEYASHQLKNAWRVWLTKLEQGEAGAEAELLVTTLNICAGHDIAFKEDILSQNEYKTLSNLTNKICQQLTQIQNKKVMETNDSNSIQDKEIEHDMQALVKSVLEEAVGIDRNIKQTFLSVAKTYYYGAYIAAETIDVHIFKVLFEPVI.

The N-terminal 25 residues, 1–25 (MASLSTPNINNTTFVNSKTQLPAVK), are a transit peptide targeting the chloroplast. A substrate-binding site is contributed by Lys-243. Mg(2+)-binding residues include Asp-377 and Asp-379. Residues 377–380 (DLDD) carry the DXDD motif motif. Lys-463 is a substrate binding site.

It belongs to the terpene synthase family. Requires Mg(2+) as cofactor. Mostly expressed in trichomes of leaves and fruits.

It is found in the plastid. The protein localises to the chloroplast. The catalysed reaction is peregrinol diphosphate = (2E,6E,10E)-geranylgeranyl diphosphate + H2O. Its pathway is secondary metabolite biosynthesis; terpenoid biosynthesis. Functionally, involved in the biosynthesis of labdane-type diterpenoid including cleroda-dienols, and peregrinol lactones and furan derivatives, dopaminergic diterpenoids that can bind to dopamine receptors in the human pituitary gland, have probably ability to lower prolactin levels, and are used to treat menstrual cycle disorders (e.g. premenstrual syndrome and mastodynia). Terpene synthase that produces peregrinol diphosphate from geranylgeranyl diphosphate (GGPP). This chain is Peregrinol diphosphate synthase TPS1, chloroplastic, found in Vitex agnus-castus (Chaste tree).